Here is a 532-residue protein sequence, read N- to C-terminus: 56 kDa type-specific antigen (532 aa).

The N-terminal stretch at 1-22 (MKKIMLIASAMSALSLPFSASA) is a signal peptide. Residues 67–87 (TNGLPFGGTLAAGMTIAPGFR) traverse the membrane as a helical segment. Positions 401–428 (QEEDAKNQGEGDCKQQQGTSEKSKKGKD) are disordered. A compositionally biased stretch (basic and acidic residues) spans 403–413 (EDAKNQGEGDC). The helical transmembrane segment at 480–500 (TGMVASGALGVAINAAEGVYV) threads the bilayer.

The protein localises to the cell membrane. May be an adherent factor for rickettsial adsorption to the host-cell surface and a determinant of virulence of individual rickettsial strain. It is the major outer membrane protein. This chain is 56 kDa type-specific antigen, found in Orientia tsutsugamushi (Rickettsia tsutsugamushi).